The chain runs to 273 residues: Glutamate 5-kinase (273 aa).

K15 is a binding site for ATP. Substrate is bound by residues S55, D142, and N158. ATP is bound by residues 178 to 179 (SD) and 220 to 226 (TGGMLSK).

This sequence belongs to the glutamate 5-kinase family.

Its subcellular location is the cytoplasm. It carries out the reaction L-glutamate + ATP = L-glutamyl 5-phosphate + ADP. It participates in amino-acid biosynthesis; L-proline biosynthesis; L-glutamate 5-semialdehyde from L-glutamate: step 1/2. Its function is as follows. Catalyzes the transfer of a phosphate group to glutamate to form L-glutamate 5-phosphate. In Streptococcus pyogenes serotype M6 (strain ATCC BAA-946 / MGAS10394), this protein is Glutamate 5-kinase.